A 430-amino-acid chain; its full sequence is Adenylosuccinate synthetase (430 aa).

GTP contacts are provided by residues 12-18 (GDEGKGK) and 40-42 (GHT). Residue aspartate 13 is the Proton acceptor of the active site. 2 residues coordinate Mg(2+): aspartate 13 and glycine 40. IMP is bound by residues 13–16 (DEGK), 38–41 (NAGH), threonine 130, arginine 144, glutamine 224, threonine 239, and arginine 303. Histidine 41 serves as the catalytic Proton donor. A substrate-binding site is contributed by 299 to 305 (TNTGRPR). Residues arginine 305, 331–333 (KLD), and 413–415 (STS) each bind GTP.

This sequence belongs to the adenylosuccinate synthetase family. In terms of assembly, homodimer. It depends on Mg(2+) as a cofactor.

The protein localises to the cytoplasm. The catalysed reaction is IMP + L-aspartate + GTP = N(6)-(1,2-dicarboxyethyl)-AMP + GDP + phosphate + 2 H(+). It functions in the pathway purine metabolism; AMP biosynthesis via de novo pathway; AMP from IMP: step 1/2. Plays an important role in the de novo pathway of purine nucleotide biosynthesis. Catalyzes the first committed step in the biosynthesis of AMP from IMP. This is Adenylosuccinate synthetase from Rhodopseudomonas palustris (strain BisB5).